The primary structure comprises 344 residues: MSNAITMGIFWHLIGAASAACFYAPFKKVKKWSWETMWSVGGIVSWIILPWAISALLLPNFWAYYSSFSLSTLLPVFLFGAMWGIGNINYGLTMRYLGMSMGIGIAIGITLIVGTLMTPIINGNFDVLINTEGGRMTLLGVLVALIGVGIVTRAGQLKERKMGIKAEEFNLKKGLVLAVMCGIFSAGMSFAMNAAKPMHEAAAALGVDPLYVALPSYVVIMGGGAIINLGFCFIRLAKVKDLSLKADFSLAKPLIIHNVLLSALGGLMWYLQFFFYAWGHARIPAQYDYISWMLHMSFYVLCGGIVGLVLKEWNNAGRRPVTVLSLGCVVIIVAANIVGMGMAN.

10 helical membrane-spanning segments follow: residues 4–24 (AITM…CFYA), 38–58 (WSVG…ALLL), 68–88 (FSLS…IGNI), 101–121 (MGIG…TPII), 137–157 (TLLG…AGQL), 175–195 (LVLA…MNAA), 214–234 (LPSY…FCFI), 259–279 (VLLS…YAWG), 290–310 (ISWM…GLVL), and 323–343 (VLSL…MGMA).

This sequence belongs to the L-rhamnose transporter (TC 2.A.7.6) family.

Its subcellular location is the cell inner membrane. The catalysed reaction is L-rhamnopyranose(in) + H(+)(in) = L-rhamnopyranose(out) + H(+)(out). Functionally, uptake of L-rhamnose across the cytoplasmic membrane with the concomitant transport of protons into the cell (symport system). In Escherichia coli O157:H7, this protein is L-rhamnose-proton symporter.